The chain runs to 194 residues: dITP/XTP pyrophosphatase (194 aa).

8-13 provides a ligand contact to substrate; it reads TKNKGK. Glu41 and Asp70 together coordinate Mg(2+). The Proton acceptor role is filled by Asp70. Residues Ser71, 153-156, Lys176, and 181-182 each bind substrate; these read FGYD and HR.

It belongs to the HAM1 NTPase family. Homodimer. Mg(2+) serves as cofactor.

It catalyses the reaction XTP + H2O = XMP + diphosphate + H(+). The catalysed reaction is dITP + H2O = dIMP + diphosphate + H(+). The enzyme catalyses ITP + H2O = IMP + diphosphate + H(+). Its function is as follows. Pyrophosphatase that catalyzes the hydrolysis of nucleoside triphosphates to their monophosphate derivatives, with a high preference for the non-canonical purine nucleotides XTP (xanthosine triphosphate), dITP (deoxyinosine triphosphate) and ITP. Seems to function as a house-cleaning enzyme that removes non-canonical purine nucleotides from the nucleotide pool, thus preventing their incorporation into DNA/RNA and avoiding chromosomal lesions. The protein is dITP/XTP pyrophosphatase of Halalkalibacterium halodurans (strain ATCC BAA-125 / DSM 18197 / FERM 7344 / JCM 9153 / C-125) (Bacillus halodurans).